We begin with the raw amino-acid sequence, 159 residues long: Phosphopantetheine adenylyltransferase (159 aa).

Residue T10 coordinates substrate. ATP-binding positions include T10–F11 and H18. Substrate-binding residues include K42, M74, and R88. ATP contacts are provided by residues G89–R91, E99, and W124–S130.

The protein belongs to the bacterial CoaD family. Homohexamer. The cofactor is Mg(2+).

The protein resides in the cytoplasm. It catalyses the reaction (R)-4'-phosphopantetheine + ATP + H(+) = 3'-dephospho-CoA + diphosphate. It functions in the pathway cofactor biosynthesis; coenzyme A biosynthesis; CoA from (R)-pantothenate: step 4/5. Functionally, reversibly transfers an adenylyl group from ATP to 4'-phosphopantetheine, yielding dephospho-CoA (dPCoA) and pyrophosphate. This is Phosphopantetheine adenylyltransferase from Yersinia pseudotuberculosis serotype O:3 (strain YPIII).